The primary structure comprises 418 residues: Light-independent protochlorophyllide reductase subunit N (418 aa).

The [4Fe-4S] cluster site is built by Cys-17, Cys-42, and Cys-103.

It belongs to the BchN/ChlN family. As to quaternary structure, protochlorophyllide reductase is composed of three subunits; ChlL, ChlN and ChlB. Forms a heterotetramer of two ChlB and two ChlN subunits. [4Fe-4S] cluster is required as a cofactor.

The enzyme catalyses chlorophyllide a + oxidized 2[4Fe-4S]-[ferredoxin] + 2 ADP + 2 phosphate = protochlorophyllide a + reduced 2[4Fe-4S]-[ferredoxin] + 2 ATP + 2 H2O. It participates in porphyrin-containing compound metabolism; chlorophyll biosynthesis (light-independent). Its function is as follows. Component of the dark-operative protochlorophyllide reductase (DPOR) that uses Mg-ATP and reduced ferredoxin to reduce ring D of protochlorophyllide (Pchlide) to form chlorophyllide a (Chlide). This reaction is light-independent. The NB-protein (ChlN-ChlB) is the catalytic component of the complex. This is Light-independent protochlorophyllide reductase subunit N from Prochlorococcus marinus (strain AS9601).